The primary structure comprises 167 residues: Large ribosomal subunit protein uL10 (167 aa).

Belongs to the universal ribosomal protein uL10 family. In terms of assembly, part of the ribosomal stalk of the 50S ribosomal subunit. The N-terminus interacts with L11 and the large rRNA to form the base of the stalk. The C-terminus forms an elongated spine to which L12 dimers bind in a sequential fashion forming a multimeric L10(L12)X complex.

Functionally, forms part of the ribosomal stalk, playing a central role in the interaction of the ribosome with GTP-bound translation factors. This is Large ribosomal subunit protein uL10 from Yersinia enterocolitica serotype O:8 / biotype 1B (strain NCTC 13174 / 8081).